Reading from the N-terminus, the 417-residue chain is Serine hydroxymethyltransferase (417 aa).

(6S)-5,6,7,8-tetrahydrofolate contacts are provided by residues leucine 122 and glycine 126–leucine 128. An N6-(pyridoxal phosphate)lysine modification is found at lysine 230. Serine 355–phenylalanine 357 lines the (6S)-5,6,7,8-tetrahydrofolate pocket.

The protein belongs to the SHMT family. As to quaternary structure, homodimer. The cofactor is pyridoxal 5'-phosphate.

It localises to the cytoplasm. The enzyme catalyses (6R)-5,10-methylene-5,6,7,8-tetrahydrofolate + glycine + H2O = (6S)-5,6,7,8-tetrahydrofolate + L-serine. The protein operates within one-carbon metabolism; tetrahydrofolate interconversion. Its pathway is amino-acid biosynthesis; glycine biosynthesis; glycine from L-serine: step 1/1. Functionally, catalyzes the reversible interconversion of serine and glycine with tetrahydrofolate (THF) serving as the one-carbon carrier. This reaction serves as the major source of one-carbon groups required for the biosynthesis of purines, thymidylate, methionine, and other important biomolecules. Also exhibits THF-independent aldolase activity toward beta-hydroxyamino acids, producing glycine and aldehydes, via a retro-aldol mechanism. The chain is Serine hydroxymethyltransferase from Francisella philomiragia subsp. philomiragia (strain ATCC 25017 / CCUG 19701 / FSC 153 / O#319-036).